The following is a 128-amino-acid chain: uncharacterized protein (128 aa).

This is an uncharacterized protein from Vaccinia virus (strain Copenhagen) (VACV).